The chain runs to 991 residues: 5'-3' exoribonuclease 2 (991 aa).

The Nuclear localization signal signature appears at 264–268 (TKKTK). Residues 404 to 418 (RRNENYRRRQQRESN) show a composition bias toward basic and acidic residues. Disordered regions lie at residues 404 to 461 (RRNE…TQKI), 547 to 582 (SIES…ENTD), and 872 to 991 (AERS…NGYY). Low complexity predominate over residues 433–452 (SVETQSTEVVTSSKSTSVDT). Low complexity-rich tracts occupy residues 878–889 (SRRNNGNSYRGG) and 896–910 (RRSY…RQSY). Over residues 926–938 (WSGNGNFPRSNAS) the composition is skewed to polar residues. A compositionally biased stretch (gly residues) spans 946–958 (EGYGGRSRGGGYS). The span at 980 to 991 (ESYNNNNRNGYY) shows a compositional bias: polar residues.

It belongs to the 5'-3' exonuclease family. XRN2/RAT1 subfamily. Interacts with din1/rai1; the interaction is direct, stabilizes dhp1 protein structure and may stimulate its exoribonuclease activity. The interaction also stimulates din1 pyrophosphohydrolase activity, probably by recruiting it to mRNA substrates.

Its subcellular location is the nucleus. Functionally, possesses 5'-&gt;3' exoribonuclease activity. Required for the processing of nuclear mRNA and rRNA precursors. May promote the termination of transcription by RNA polymerase II. Essential for vegetative cell growth and chromosome segregation. In Schizosaccharomyces pombe (strain 972 / ATCC 24843) (Fission yeast), this protein is 5'-3' exoribonuclease 2 (dhp1).